Consider the following 393-residue polypeptide: NAD(P)H-quinone oxidoreductase subunit H, chloroplastic (393 aa).

The protein belongs to the complex I 49 kDa subunit family. NDH is composed of at least 16 different subunits, 5 of which are encoded in the nucleus.

The protein localises to the plastid. It localises to the chloroplast thylakoid membrane. The catalysed reaction is a plastoquinone + NADH + (n+1) H(+)(in) = a plastoquinol + NAD(+) + n H(+)(out). The enzyme catalyses a plastoquinone + NADPH + (n+1) H(+)(in) = a plastoquinol + NADP(+) + n H(+)(out). NDH shuttles electrons from NAD(P)H:plastoquinone, via FMN and iron-sulfur (Fe-S) centers, to quinones in the photosynthetic chain and possibly in a chloroplast respiratory chain. The immediate electron acceptor for the enzyme in this species is believed to be plastoquinone. Couples the redox reaction to proton translocation, and thus conserves the redox energy in a proton gradient. This is NAD(P)H-quinone oxidoreductase subunit H, chloroplastic from Barbarea verna (Land cress).